We begin with the raw amino-acid sequence, 486 residues long: Glutamyl-tRNA(Gln) amidotransferase subunit A (486 aa).

Residues K80 and S155 each act as charge relay system in the active site. The Acyl-ester intermediate role is filled by S179.

This sequence belongs to the amidase family. GatA subfamily. As to quaternary structure, heterotrimer of A, B and C subunits.

It catalyses the reaction L-glutamyl-tRNA(Gln) + L-glutamine + ATP + H2O = L-glutaminyl-tRNA(Gln) + L-glutamate + ADP + phosphate + H(+). In terms of biological role, allows the formation of correctly charged Gln-tRNA(Gln) through the transamidation of misacylated Glu-tRNA(Gln) in organisms which lack glutaminyl-tRNA synthetase. The reaction takes place in the presence of glutamine and ATP through an activated gamma-phospho-Glu-tRNA(Gln). This chain is Glutamyl-tRNA(Gln) amidotransferase subunit A, found in Geobacillus sp. (strain WCH70).